Consider the following 282-residue polypeptide: E3 ubiquitin-protein ligase SIAH1B (282 aa).

Residues 1-17 are compositionally biased toward polar residues; it reads MSRQAATALSTGTSKCP. The interval 1 to 23 is disordered; the sequence is MSRQAATALSTGTSKCPPSQRVP. The residue at position 19 (serine 19) is a Phosphoserine; by ATM and ATR. The segment at 41–76 adopts an RING-type zinc-finger fold; that stretch reads CPVCFDYVLPPILQCQSGHLVCSNCRPKLTCCPTCR. The segment at 90 to 282 is SBD; it reads VANSVLFPCK…LGINVTISMC (193 aa). The SIAH-type zinc finger occupies 93–153; it reads SVLFPCKYSA…VMPHLMHQHK (61 aa). Residues cysteine 98, cysteine 105, histidine 117, cysteine 121, cysteine 128, cysteine 135, histidine 147, and histidine 152 each contribute to the Zn(2+) site.

This sequence belongs to the SINA (Seven in absentia) family. Homodimer. Phosphorylated on Ser-19 by ATM and ATR. In terms of tissue distribution, widely expressed at low level in embryos and adults. Due to the high similarity between SIAH1A and SIAH1B, it is difficult to distinguish its own tissue specificity. Overexpressed in endothelial cells of adult lung.

The protein resides in the cytoplasm. It localises to the nucleus. The enzyme catalyses S-ubiquitinyl-[E2 ubiquitin-conjugating enzyme]-L-cysteine + [acceptor protein]-L-lysine = [E2 ubiquitin-conjugating enzyme]-L-cysteine + N(6)-ubiquitinyl-[acceptor protein]-L-lysine.. The protein operates within protein modification; protein ubiquitination. In terms of biological role, E3 ubiquitin-protein ligase that mediates ubiquitination and subsequent proteasomal degradation of target proteins. E3 ubiquitin ligases accept ubiquitin from an E2 ubiquitin-conjugating enzyme in the form of a thioester and then directly transfers the ubiquitin to targeted substrates. Mediates E3 ubiquitin ligase activity either through direct binding to substrates or by functioning as the essential RING domain subunit of larger E3 complexes. The polypeptide is E3 ubiquitin-protein ligase SIAH1B (Siah1b) (Mus musculus (Mouse)).